The following is a 435-amino-acid chain: Serine--tRNA ligase (435 aa).

An L-serine-binding site is contributed by 238–240 (TAE). Residue 269 to 271 (RKE) coordinates ATP. Glu-292 serves as a coordination point for L-serine. ATP is bound at residue 356-359 (EISS). Ser-391 is an L-serine binding site.

This sequence belongs to the class-II aminoacyl-tRNA synthetase family. Type-1 seryl-tRNA synthetase subfamily. As to quaternary structure, homodimer. The tRNA molecule binds across the dimer.

The protein resides in the cytoplasm. The enzyme catalyses tRNA(Ser) + L-serine + ATP = L-seryl-tRNA(Ser) + AMP + diphosphate + H(+). The catalysed reaction is tRNA(Sec) + L-serine + ATP = L-seryl-tRNA(Sec) + AMP + diphosphate + H(+). It participates in aminoacyl-tRNA biosynthesis; selenocysteinyl-tRNA(Sec) biosynthesis; L-seryl-tRNA(Sec) from L-serine and tRNA(Sec): step 1/1. Catalyzes the attachment of serine to tRNA(Ser). Is also able to aminoacylate tRNA(Sec) with serine, to form the misacylated tRNA L-seryl-tRNA(Sec), which will be further converted into selenocysteinyl-tRNA(Sec). The chain is Serine--tRNA ligase from Leuconostoc mesenteroides subsp. mesenteroides (strain ATCC 8293 / DSM 20343 / BCRC 11652 / CCM 1803 / JCM 6124 / NCDO 523 / NBRC 100496 / NCIMB 8023 / NCTC 12954 / NRRL B-1118 / 37Y).